We begin with the raw amino-acid sequence, 111 residues long: Large ribosomal subunit protein uL22 (111 aa).

This sequence belongs to the universal ribosomal protein uL22 family. In terms of assembly, part of the 50S ribosomal subunit.

Its function is as follows. This protein binds specifically to 23S rRNA; its binding is stimulated by other ribosomal proteins, e.g. L4, L17, and L20. It is important during the early stages of 50S assembly. It makes multiple contacts with different domains of the 23S rRNA in the assembled 50S subunit and ribosome. In terms of biological role, the globular domain of the protein is located near the polypeptide exit tunnel on the outside of the subunit, while an extended beta-hairpin is found that lines the wall of the exit tunnel in the center of the 70S ribosome. This chain is Large ribosomal subunit protein uL22, found in Xanthomonas euvesicatoria pv. vesicatoria (strain 85-10) (Xanthomonas campestris pv. vesicatoria).